The primary structure comprises 285 residues: Protein pxr1 (285 aa).

A compositionally biased stretch (basic residues) spans 1 to 11; sequence MGLAAPRKKIK. The segment at 1–23 is disordered; the sequence is MGLAAPRKKIKISHDPNNTNWSR. The 55-residue stretch at 25-79 folds into the G-patch domain; that stretch reads TSGFGHKILSSQGWTPGSFLGARNAAHAEMFTAASASHIKVVLKDDTLGLGARPK. Positions 144–263 are disordered; it reads TPIVTEEPQG…MGRHVFRGRH (120 aa). The span at 152-163 shows a compositional bias: basic and acidic residues; the sequence is QGIHKDKQEDKL. Over residues 190 to 208 the composition is skewed to basic residues; the sequence is KKKKSKSKNHREKKDRKRK. The span at 224–234 shows a compositional bias: basic and acidic residues; the sequence is RSTEKKSKATR. Over residues 254–263 the composition is skewed to basic residues; that stretch reads MGRHVFRGRH.

This sequence belongs to the PINX1 family.

It is found in the nucleus. Its subcellular location is the nucleolus. In terms of biological role, involved in rRNA-processing at A0, A1 and A2 sites and negatively regulates telomerase. This is Protein pxr1 (pxr1) from Aspergillus niger (strain ATCC MYA-4892 / CBS 513.88 / FGSC A1513).